The following is a 246-amino-acid chain: UDP-N-acetyl-D-mannosaminuronic acid transferase (246 aa).

Belongs to the glycosyltransferase 26 family.

The catalysed reaction is UDP-N-acetyl-alpha-D-mannosaminouronate + N-acetyl-alpha-D-glucosaminyl-di-trans,octa-cis-undecaprenyl diphosphate = beta-D-ManNAcA-(1-&gt;4)-alpha-D-GlcNAc-di-trans,octa-cis-undecaprenyl diphosphate + UDP + H(+). It participates in bacterial outer membrane biogenesis; enterobacterial common antigen biosynthesis. In terms of biological role, catalyzes the synthesis of Und-PP-GlcNAc-ManNAcA (Lipid II), the second lipid-linked intermediate involved in enterobacterial common antigen (ECA) synthesis. This is UDP-N-acetyl-D-mannosaminuronic acid transferase from Klebsiella pneumoniae (strain 342).